The primary structure comprises 413 residues: Elongation factor 1-alpha (413 aa).

The region spanning 5 to 211 is the tr-type G domain; the sequence is KEHINLAFIG…DNLAAPEKPV (207 aa). A G1 region spans residues 14 to 21; that stretch reads GHVDHGKS. A GTP-binding site is contributed by 14-21; that stretch reads GHVDHGKS. S21 is a Mg(2+) binding site. The G2 stretch occupies residues 60 to 64; it reads GVTID. A G3 region spans residues 81 to 84; that stretch reads DCPG. GTP is bound by residues 81-85 and 136-139; these read DCPGH and NKID. Positions 136–139 are G4; the sequence is NKID. Residues 175–177 form a G5 region; it reads SAF.

Belongs to the TRAFAC class translation factor GTPase superfamily. Classic translation factor GTPase family. EF-Tu/EF-1A subfamily.

The protein localises to the cytoplasm. The catalysed reaction is GTP + H2O = GDP + phosphate + H(+). Its function is as follows. GTP hydrolase that promotes the GTP-dependent binding of aminoacyl-tRNA to the A-site of ribosomes during protein biosynthesis. The sequence is that of Elongation factor 1-alpha from Methanobrevibacter smithii (strain ATCC 35061 / DSM 861 / OCM 144 / PS).